A 1452-amino-acid polypeptide reads, in one-letter code: Protein clueless (1452 aa).

2 disordered regions span residues 1–93 and 266–288; these read MALE…SNGH and KKTR…VSEP. Positions 8-24 are enriched in low complexity; that stretch reads KNSNATATSDATATKAS. Residues 42–59 show a composition bias toward polar residues; sequence PIPNSNHQNSNQNLVNGN. Positions 68–77 are enriched in basic residues; that stretch reads AKKKGKKNRN. Residue Ser-272 is modified to Phosphoserine. The 243-residue stretch at 426–668 folds into the Clu domain; sequence RAEDAFSSKL…RTFPPDVNFL (243 aa). Disordered regions lie at residues 726-775, 962-1013, and 1414-1452; these read KQSE…GDTK, AVSS…SSVS, and ANNN…ATSS. The segment covering 750 to 766 has biased composition (basic and acidic residues); it reads GADKTDVKEEKNEENEK. Basic residues predominate over residues 970–985; it reads KKRGNGGKHNKHKSSK. Residues 990–1013 show a composition bias toward low complexity; it reads QQQQQATGNQNGSSSGSSNGSSVS. Over residues 1423–1433 the composition is skewed to basic and acidic residues; sequence AVPKDVEEQKE.

Belongs to the CLU family.

The protein resides in the cytoplasm. Its function is as follows. mRNA-binding protein involved in proper cytoplasmic distribution of mitochondria. The chain is Protein clueless from Drosophila erecta (Fruit fly).